A 337-amino-acid chain; its full sequence is Tert-butanol monooxygenase / tert-amyl alcohol desaturase reductase subunit (337 aa).

The FAD-binding FR-type domain maps to 9–114; it reads KYPKTALNLR…GHPRNNFPLI (106 aa). Residues 254–337 enclose the 2Fe-2S ferredoxin-type domain; sequence FQIKIASTGT…SKGATLVLDL (84 aa). Residues Cys288, Cys293, Cys296, and Cys324 each coordinate [2Fe-2S] cluster.

It belongs to the PDR/VanB family. In terms of assembly, this two-component enzyme is composed of an oxygenase (MdpJ) and a reductase (MdpK). The cofactor is [2Fe-2S] cluster.

Its function is as follows. Reductase component of a two-component system involved in the degradation of tertiary alcohols such as tert-butyl alcohol (TBA) and tert-amyl alcohol (TAA). MdpK probably provides electrons via its [2Fe-2S] iron-sulfur cluster to the MdpJ oxygenase subunit. This is Tert-butanol monooxygenase / tert-amyl alcohol desaturase reductase subunit from Aquincola tertiaricarbonis.